The sequence spans 251 residues: Malonyl-[acyl-carrier protein] O-methyltransferase (251 aa).

The protein belongs to the methyltransferase superfamily.

It catalyses the reaction malonyl-[ACP] + S-adenosyl-L-methionine = malonyl-[ACP] methyl ester + S-adenosyl-L-homocysteine. It participates in cofactor biosynthesis; biotin biosynthesis. Converts the free carboxyl group of a malonyl-thioester to its methyl ester by transfer of a methyl group from S-adenosyl-L-methionine (SAM). It allows to synthesize pimeloyl-ACP via the fatty acid synthetic pathway. The protein is Malonyl-[acyl-carrier protein] O-methyltransferase of Erwinia billingiae (strain Eb661).